The chain runs to 80 residues: Polcalcin Cyn d 7 (80 aa).

EF-hand domains lie at 2–37 (ADTG…LGST) and 40–72 (DEVQ…NPGL). Ca(2+)-binding residues include Asp15, Asn17, Asp19, Lys21, Glu26, Asp50, Asp52, Asp54, and Glu61.

This is Polcalcin Cyn d 7 from Cynodon dactylon (Bermuda grass).